A 453-amino-acid polypeptide reads, in one-letter code: MIILETRSLKYSYPDGTAAVQDINIEIKKGKKVAFVGQNGSGKSTLFLLLNGTLKPQEGEILFHGVPFKYDSKSLREIRKSVGIVFQNSDDQIFAPTVYQDVAFGPANLGYSKERVDACVQSALEYVGLIRLKDRPPHHLSGGQKKRVAIAGVMAMEPEVIILDEPLSNLDPVGADEIMDLLNEFNHFGSTIIISTHDVDLAYRWSDYVFLMSNSKLIGQGTPAEVFKEQELLKKVGLRQPTTLEIYHEIERRGLAYGRNSPKTIPDLVNTLKPLDLMWVDVAPGVREGDNLNIGVMYGEYATQSPYEAINATVLHIHPNGRAIVELKRKGIKAGGVLLYDTDKYSPDEVRQIIKEGEIAFVGAMGKKSKTLAEQDGIRLDVTSGVIDKSILMALCGKRCLILTAGGMVDHALKRTREYVDKSGIEFTVGVVNRDGGCKWLEETEGSPEKLKT.

One can recognise an ABC transporter domain in the interval 4-239 (LETRSLKYSY…QELLKKVGLR (236 aa)). Residue 37–44 (GQNGSGKS) coordinates ATP.

This sequence belongs to the ABC transporter superfamily.

It localises to the cell membrane. Functionally, probably part of an ABC transporter complex. Responsible for energy coupling to the transport system. The protein is Putative ABC transporter ATP-binding protein MM_0462 of Methanosarcina mazei (strain ATCC BAA-159 / DSM 3647 / Goe1 / Go1 / JCM 11833 / OCM 88) (Methanosarcina frisia).